The sequence spans 424 residues: Tyrosine--tRNA ligase (424 aa).

Residue Tyr-37 participates in L-tyrosine binding. A 'HIGH' region motif is present at residues 42 to 51 (PTADSLHLGH). L-tyrosine contacts are provided by Tyr-174 and Gln-178. Positions 234-238 (KFGKT) match the 'KMSKS' region motif. Lys-237 contacts ATP. Positions 357-414 (TGLIDALVASGLAKSKSEARTFIQSGSVAINGNKAEALDHAIGGDELLYGRFTILRRG) constitute an S4 RNA-binding domain.

The protein belongs to the class-I aminoacyl-tRNA synthetase family. TyrS type 1 subfamily. As to quaternary structure, homodimer.

Its subcellular location is the cytoplasm. It catalyses the reaction tRNA(Tyr) + L-tyrosine + ATP = L-tyrosyl-tRNA(Tyr) + AMP + diphosphate + H(+). Its function is as follows. Catalyzes the attachment of tyrosine to tRNA(Tyr) in a two-step reaction: tyrosine is first activated by ATP to form Tyr-AMP and then transferred to the acceptor end of tRNA(Tyr). The protein is Tyrosine--tRNA ligase of Dechloromonas aromatica (strain RCB).